The sequence spans 346 residues: Glycerol-1-phosphate dehydrogenase [NAD(P)+] (346 aa).

Residues 93 to 97 (GSIID) and 115 to 118 (TTAS) each bind NAD(+). Residue D120 coordinates substrate. S124 lines the NAD(+) pocket. Residue D167 participates in substrate binding. Zn(2+) is bound by residues D167 and H247. H251 is a substrate binding site. H263 contacts Zn(2+).

The protein belongs to the glycerol-1-phosphate dehydrogenase family. It depends on Zn(2+) as a cofactor.

It localises to the cytoplasm. The enzyme catalyses sn-glycerol 1-phosphate + NAD(+) = dihydroxyacetone phosphate + NADH + H(+). It catalyses the reaction sn-glycerol 1-phosphate + NADP(+) = dihydroxyacetone phosphate + NADPH + H(+). Its pathway is membrane lipid metabolism; glycerophospholipid metabolism. Functionally, catalyzes the NAD(P)H-dependent reduction of dihydroxyacetonephosphate (DHAP or glycerone phosphate) to glycerol 1-phosphate (G1P). The G1P thus generated is used as the glycerophosphate backbone of phospholipids in the cellular membranes of Archaea. The chain is Glycerol-1-phosphate dehydrogenase [NAD(P)+] from Pyrococcus abyssi (strain GE5 / Orsay).